The chain runs to 213 residues: Uridine kinase (213 aa).

Residue 13-20 (GGSCSGKT) coordinates ATP.

It belongs to the uridine kinase family.

Its subcellular location is the cytoplasm. It carries out the reaction uridine + ATP = UMP + ADP + H(+). The catalysed reaction is cytidine + ATP = CMP + ADP + H(+). Its pathway is pyrimidine metabolism; CTP biosynthesis via salvage pathway; CTP from cytidine: step 1/3. It functions in the pathway pyrimidine metabolism; UMP biosynthesis via salvage pathway; UMP from uridine: step 1/1. The chain is Uridine kinase (udk) from Mycoplasma pneumoniae (strain ATCC 29342 / M129 / Subtype 1) (Mycoplasmoides pneumoniae).